Reading from the N-terminus, the 725-residue chain is Ribosomal RNA large subunit methyltransferase K/L (725 aa).

The 112-residue stretch at V46–L157 folds into the THUMP domain.

This sequence belongs to the methyltransferase superfamily. RlmKL family.

It localises to the cytoplasm. The enzyme catalyses guanosine(2445) in 23S rRNA + S-adenosyl-L-methionine = N(2)-methylguanosine(2445) in 23S rRNA + S-adenosyl-L-homocysteine + H(+). It catalyses the reaction guanosine(2069) in 23S rRNA + S-adenosyl-L-methionine = N(2)-methylguanosine(2069) in 23S rRNA + S-adenosyl-L-homocysteine + H(+). In terms of biological role, specifically methylates the guanine in position 2445 (m2G2445) and the guanine in position 2069 (m7G2069) of 23S rRNA. The sequence is that of Ribosomal RNA large subunit methyltransferase K/L from Pseudomonas aeruginosa (strain ATCC 15692 / DSM 22644 / CIP 104116 / JCM 14847 / LMG 12228 / 1C / PRS 101 / PAO1).